A 276-amino-acid polypeptide reads, in one-letter code: Light-independent protochlorophyllide reductase iron-sulfur ATP-binding protein (276 aa).

ATP-binding positions include 12–17 (GIGKST) and lysine 41. Residue serine 16 participates in Mg(2+) binding. The [4Fe-4S] cluster site is built by cysteine 97 and cysteine 131. An ATP-binding site is contributed by 182–183 (NR).

Belongs to the NifH/BchL/ChlL family. In terms of assembly, homodimer. Protochlorophyllide reductase is composed of three subunits; BchL, BchN and BchB. Requires [4Fe-4S] cluster as cofactor.

The enzyme catalyses chlorophyllide a + oxidized 2[4Fe-4S]-[ferredoxin] + 2 ADP + 2 phosphate = protochlorophyllide a + reduced 2[4Fe-4S]-[ferredoxin] + 2 ATP + 2 H2O. Its pathway is porphyrin-containing compound metabolism; bacteriochlorophyll biosynthesis (light-independent). In terms of biological role, component of the dark-operative protochlorophyllide reductase (DPOR) that uses Mg-ATP and reduced ferredoxin to reduce ring D of protochlorophyllide (Pchlide) to form chlorophyllide a (Chlide). This reaction is light-independent. The L component serves as a unique electron donor to the NB-component of the complex, and binds Mg-ATP. This Chlorobium luteolum (strain DSM 273 / BCRC 81028 / 2530) (Pelodictyon luteolum) protein is Light-independent protochlorophyllide reductase iron-sulfur ATP-binding protein.